A 196-amino-acid chain; its full sequence is Protein Flattop (196 aa).

Residues 107-196 are disordered; sequence NGLRPEIFGK…PHAGRNLAEV (90 aa). Basic and acidic residues predominate over residues 113-124; it reads IFGKPHDPDSQK. Residues 137 to 149 are compositionally biased toward low complexity; the sequence is APSPTIIPSSPAS. Polar residues predominate over residues 150 to 162; it reads NLSSPDQLQSSHP.

The protein belongs to the Flattop family. As to quaternary structure, microtubule inner protein component of sperm flagellar doublet microtubules. Interacts with DLG3. Expressed in trachea multiciliated cells.

The protein localises to the cytoplasm. It is found in the cytoskeleton. The protein resides in the cilium basal body. Its subcellular location is the cell projection. It localises to the cilium. The protein localises to the apical cell membrane. It is found in the cilium axoneme. The protein resides in the flagellum axoneme. Functionally, microtubule inner protein (MIP) part of the dynein-decorated doublet microtubules (DMTs) in cilia axoneme. Acts as a regulator of cilium basal body docking and positioning in mono- and multiciliated cells. Regulates basal body docking and cilia formation in multiciliated lung cells. Regulates kinocilium positioning and stereocilia bundle morphogenesis in the inner ear. The sequence is that of Protein Flattop from Bos taurus (Bovine).